The primary structure comprises 160 residues: Lipoprotein signal peptidase (160 aa).

A run of 3 helical transmembrane segments spans residues 13-33, 72-92, and 104-124; these read IYIT…RLII, WFLS…ITKL, and SLII…GFVV. Residues Asp-125 and Asp-143 contribute to the active site. The helical transmembrane segment at 134–154 threads the bilayer; it reads WHFATFNIADCSIFIGIIILM.

It belongs to the peptidase A8 family.

Its subcellular location is the cell inner membrane. It carries out the reaction Release of signal peptides from bacterial membrane prolipoproteins. Hydrolyzes -Xaa-Yaa-Zaa-|-(S,diacylglyceryl)Cys-, in which Xaa is hydrophobic (preferably Leu), and Yaa (Ala or Ser) and Zaa (Gly or Ala) have small, neutral side chains.. It functions in the pathway protein modification; lipoprotein biosynthesis (signal peptide cleavage). This protein specifically catalyzes the removal of signal peptides from prolipoproteins. The chain is Lipoprotein signal peptidase from Buchnera aphidicola subsp. Acyrthosiphon pisum (strain 5A).